We begin with the raw amino-acid sequence, 224 residues long: Thiamine-phosphate synthase (224 aa).

4-amino-2-methyl-5-(diphosphooxymethyl)pyrimidine is bound by residues 44–48 (QFREK) and Asn-79. Positions 80 and 99 each coordinate Mg(2+). Ser-117 is a 4-amino-2-methyl-5-(diphosphooxymethyl)pyrimidine binding site. 143 to 145 (TST) contributes to the 2-[(2R,5Z)-2-carboxy-4-methylthiazol-5(2H)-ylidene]ethyl phosphate binding site. Lys-146 contacts 4-amino-2-methyl-5-(diphosphooxymethyl)pyrimidine. Residues Gly-175 and 195 to 196 (IS) each bind 2-[(2R,5Z)-2-carboxy-4-methylthiazol-5(2H)-ylidene]ethyl phosphate.

Belongs to the thiamine-phosphate synthase family. Mg(2+) is required as a cofactor.

The enzyme catalyses 2-[(2R,5Z)-2-carboxy-4-methylthiazol-5(2H)-ylidene]ethyl phosphate + 4-amino-2-methyl-5-(diphosphooxymethyl)pyrimidine + 2 H(+) = thiamine phosphate + CO2 + diphosphate. It carries out the reaction 2-(2-carboxy-4-methylthiazol-5-yl)ethyl phosphate + 4-amino-2-methyl-5-(diphosphooxymethyl)pyrimidine + 2 H(+) = thiamine phosphate + CO2 + diphosphate. It catalyses the reaction 4-methyl-5-(2-phosphooxyethyl)-thiazole + 4-amino-2-methyl-5-(diphosphooxymethyl)pyrimidine + H(+) = thiamine phosphate + diphosphate. Its pathway is cofactor biosynthesis; thiamine diphosphate biosynthesis; thiamine phosphate from 4-amino-2-methyl-5-diphosphomethylpyrimidine and 4-methyl-5-(2-phosphoethyl)-thiazole: step 1/1. In terms of biological role, condenses 4-methyl-5-(beta-hydroxyethyl)thiazole monophosphate (THZ-P) and 2-methyl-4-amino-5-hydroxymethyl pyrimidine pyrophosphate (HMP-PP) to form thiamine monophosphate (TMP). This is Thiamine-phosphate synthase from Bacillus cereus (strain ATCC 10987 / NRS 248).